The following is a 407-amino-acid chain: 1-deoxy-D-xylulose 5-phosphate reductoisomerase (407 aa).

NADPH contacts are provided by T25, G26, S27, I28, N53, and N136. Position 137 (K137) interacts with 1-deoxy-D-xylulose 5-phosphate. E138 provides a ligand contact to NADPH. A Mn(2+)-binding site is contributed by D162. Residues S163, E164, S188, and H211 each contribute to the 1-deoxy-D-xylulose 5-phosphate site. Residue E164 participates in Mn(2+) binding. G217 is an NADPH binding site. Residues S224, N229, K230, and E233 each coordinate 1-deoxy-D-xylulose 5-phosphate. Residue E233 coordinates Mn(2+).

It belongs to the DXR family. Mg(2+) is required as a cofactor. It depends on Mn(2+) as a cofactor.

The enzyme catalyses 2-C-methyl-D-erythritol 4-phosphate + NADP(+) = 1-deoxy-D-xylulose 5-phosphate + NADPH + H(+). It participates in isoprenoid biosynthesis; isopentenyl diphosphate biosynthesis via DXP pathway; isopentenyl diphosphate from 1-deoxy-D-xylulose 5-phosphate: step 1/6. Functionally, catalyzes the NADPH-dependent rearrangement and reduction of 1-deoxy-D-xylulose-5-phosphate (DXP) to 2-C-methyl-D-erythritol 4-phosphate (MEP). The protein is 1-deoxy-D-xylulose 5-phosphate reductoisomerase of Rhodopseudomonas palustris (strain BisA53).